A 521-amino-acid polypeptide reads, in one-letter code: Glycogen synthase (521 aa).

K18 is a binding site for ADP-alpha-D-glucose.

Belongs to the glycosyltransferase 1 family. Bacterial/plant glycogen synthase subfamily.

It carries out the reaction [(1-&gt;4)-alpha-D-glucosyl](n) + ADP-alpha-D-glucose = [(1-&gt;4)-alpha-D-glucosyl](n+1) + ADP + H(+). Its pathway is glycan biosynthesis; glycogen biosynthesis. Functionally, synthesizes alpha-1,4-glucan chains using ADP-glucose. The polypeptide is Glycogen synthase (Bordetella petrii (strain ATCC BAA-461 / DSM 12804 / CCUG 43448)).